The chain runs to 1091 residues: Protein JSN1 (1091 aa).

2 disordered regions span residues Glu-31–Ser-51 and His-75–Thr-131. Positions Thr-99–Arg-111 are enriched in polar residues. Ser-129 is modified (phosphoserine). Phosphothreonine is present on Thr-131. A phosphoserine mark is found at Ser-160 and Ser-168. In terms of domain architecture, RRM spans Asn-340–Ile-426. 2 stretches are compositionally biased toward low complexity: residues Gln-482–Ser-494 and Asn-507–Ala-520. Disordered stretches follow at residues Gln-482–Asn-534 and His-568–Pro-591. Residues Gln-557–Ser-913 enclose the PUM-HD domain. A compositionally biased stretch (polar residues) spans His-568 to Phe-577. Pumilio repeat units lie at residues Ala-617–Arg-652, Lys-653–Gln-689, Gly-690–Glu-724, Ser-725–Val-760, and Arg-801–Asp-837. Residues Leu-911–Gly-981 are disordered. Residue Ser-913 is modified to Phosphoserine. Composition is skewed to low complexity over residues Ser-915–His-935 and Ser-951–Ser-979.

The polypeptide is Protein JSN1 (JSN1) (Saccharomyces cerevisiae (strain ATCC 204508 / S288c) (Baker's yeast)).